A 151-amino-acid polypeptide reads, in one-letter code: Shadow of prion protein (151 aa).

The signal sequence occupies residues 1-24 (MNWAPATCWALLLAAAFLCDSGAA). The disordered stretch occupies residues 89 to 113 (WRRAAGPGERGLEDEEDGVPGGNGT). Asparagine 111 carries an N-linked (GlcNAc...) asparagine glycan. The GPI-anchor amidated glycine moiety is linked to residue glycine 126. A propeptide spans 127-151 (AGPTRGPRLCLVLGGALGALGLLRP) (removed in mature form).

Belongs to the SPRN family. In terms of processing, N-glycosylated. In terms of tissue distribution, mainly expressed in brain. In brain, it is expressed in hippocampus.

The protein localises to the cell membrane. Its function is as follows. Prion-like protein that has PrP(C)-like neuroprotective activity. May act as a modulator for the biological actions of normal and abnormal PrP. The protein is Shadow of prion protein (SPRN) of Homo sapiens (Human).